The following is a 356-amino-acid chain: Probable cysteine protease RDL6 (356 aa).

Positions 1–26 are cleaved as a signal peptide; that stretch reads MGFVRPVCMTILFLLIVFVLSAPSSA. Residues 27-132 constitute a propeptide, activation peptide; it reads MDLPATSGGH…RRYVPLAGDQ (106 aa). N-linked (GlcNAc...) asparagine glycans are attached at residues Asn37 and Asn86. 3 disulfide bridges follow: Cys154-Cys195, Cys188-Cys229, and Cys288-Cys339. The active site involves Cys157. Active-site residues include His294 and Asn314.

Belongs to the peptidase C1 family.

Probable thiol protease. The chain is Probable cysteine protease RDL6 from Arabidopsis thaliana (Mouse-ear cress).